The sequence spans 211 residues: Uracil phosphoribosyltransferase (211 aa).

5-phospho-alpha-D-ribose 1-diphosphate contacts are provided by residues Arg78, Arg103, and 130–138; that span reads DPMLATGNS. Residues Ile193 and 198–200 each bind uracil; that span reads GDA. Asp199 is a binding site for 5-phospho-alpha-D-ribose 1-diphosphate.

It belongs to the UPRTase family. Mg(2+) serves as cofactor.

The enzyme catalyses UMP + diphosphate = 5-phospho-alpha-D-ribose 1-diphosphate + uracil. It functions in the pathway pyrimidine metabolism; UMP biosynthesis via salvage pathway; UMP from uracil: step 1/1. Its activity is regulated as follows. Allosterically activated by GTP. Functionally, catalyzes the conversion of uracil and 5-phospho-alpha-D-ribose 1-diphosphate (PRPP) to UMP and diphosphate. The chain is Uracil phosphoribosyltransferase from Acinetobacter baumannii (strain ATCC 17978 / DSM 105126 / CIP 53.77 / LMG 1025 / NCDC KC755 / 5377).